Consider the following 419-residue polypeptide: Sulfate adenylyltransferase (419 aa).

It belongs to the sulfate adenylyltransferase family.

The catalysed reaction is sulfate + ATP + H(+) = adenosine 5'-phosphosulfate + diphosphate. Its pathway is sulfur metabolism; hydrogen sulfide biosynthesis; sulfite from sulfate: step 1/3. This is Sulfate adenylyltransferase from Psychrobacter sp. (strain PRwf-1).